The chain runs to 451 residues: MAGVAGGGGNGNDFQWCFSQVQGAVDEDVAEADIISTVEFNYSGDLLATGDKGGRVVIFQREQENKSRPHSRGEYNVYSTFQSHEPEFDYLKSLEIEEKINKIRWLPQQNAAHFLLSTNDKTIKLWKISERDKRAEGYNLKDEDGRLRDPFKITALRVPILKPMDLMVEASPRRIFANAHTYHINSISVNSDHETYLSADDLRINLWHLEITDRSFNIVDIKPANMEELTEVITAAEFHPHHCNVFVYSSSKGTIRLCDMRSSALCDRHSKFFEEPEDPSSRSFFSEIISSISDVKFSHSGRYMMTRDYLSVKVWDLNMENRPVETYQVHEYLRSKLCSLYENDCIFDKFECCWNGSDGAIMTGSYNNFFRMFDRNTRRDITLEASRESSKPRAILKPRKVCTGGKRKKDEINVDSLDFNKKILHTAWHPMENIIAVAATNNLYIFQDKIN.

WD repeat units follow at residues 30–69 (AEADIISTVEFNYSGDLLATGDKGGRVVIFQREQENKSRP), 95–136 (EIEE…KRAE), 179–217 (AHTYHINSISVNSDHETYLSADDLRINLWHLEITDRSFN), 228–268 (ELTE…LCDR), 287–325 (EIISSISDVKFSHSGRYMMTRDYLSVKVWDLNMENRPVE), 342–383 (ENDC…DITL), and 418–451 (DFNKKILHTAWHPMENIIAVAATNNLYIFQDKIN).

Belongs to the phosphatase 2A regulatory subunit B family. PP2A consists of a common heterodimeric core enzyme, composed of a 36 kDa catalytic subunit (subunit C) and a 65 kDa constant regulatory subunit (PR65 or subunit A), that associates with a variety of regulatory subunits.

The protein resides in the cytoplasm. Functionally, substrate-recognition subunit of protein phosphatase 2A (PP2A) that plays a key role in cell cycle by controlling mitosis entry and exit. The activity of PP2A complexes containing PPP2R2D (PR55-delta) fluctuate during the cell cycle: the activity is high in interphase and low in mitosis. The sequence is that of Serine/threonine-protein phosphatase 2A 55 kDa regulatory subunit B delta isoform (PPP2R2D) from Gallus gallus (Chicken).